Consider the following 525-residue polypeptide: Phosphatidylinositol 4-kinase alpha 2 (525 aa).

The segment at 163-278 (SDVRQHIVDG…VKPQACIFKV (116 aa)) is pleckstrin homology (PH) domain conferring phosphoinositide binding specificity. Residues 239 to 509 (VDSGIPLQSA…VCTDAYNKWT (271 aa)) form the PI3K/PI4K catalytic domain. Residues 245–251 (LQSAAKV) form a G-loop region. Residues 373 to 381 (QPKDRHNGN) are catalytic loop. Residues 392 to 417 (HIDFGFILETSPGGNMRFENAHFKLS) form an activation loop region.

This sequence belongs to the PI3/PI4-kinase family. Type III PI4K subfamily.

The protein localises to the membrane. It carries out the reaction a 1,2-diacyl-sn-glycero-3-phospho-(1D-myo-inositol) + ATP = a 1,2-diacyl-sn-glycero-3-phospho-(1D-myo-inositol 4-phosphate) + ADP + H(+). Its function is as follows. Acts on phosphatidylinositol (PtdIns) in the first committed step in the production of the second messenger inositol-1,4,5,-trisphosphate. This Arabidopsis thaliana (Mouse-ear cress) protein is Phosphatidylinositol 4-kinase alpha 2 (PI4KA2).